The following is a 153-amino-acid chain: Probable disulfide formation protein (153 aa).

The chain crosses the membrane as a helical span at residues 4-23 (DTRLYLAWLVALAATLGSLY). Cys33 and Cys36 are oxidised to a cystine. A run of 2 helical transmembrane segments spans residues 38–57 (AQRI…AFVG) and 64–81 (YVLP…FQNL). Cysteines 93 and 101 form a disulfide. Residues 117 to 139 (RALTIPVLSMIAFALILALLSWP) form a helical membrane-spanning segment.

It belongs to the DsbB family. BdbC subfamily.

The protein localises to the cell membrane. Functionally, required for disulfide bond formation in some proteins. The protein is Probable disulfide formation protein of Deinococcus radiodurans (strain ATCC 13939 / DSM 20539 / JCM 16871 / CCUG 27074 / LMG 4051 / NBRC 15346 / NCIMB 9279 / VKM B-1422 / R1).